Here is a 227-residue protein sequence, read N- to C-terminus: Ras-related protein Rab-3C (227 aa).

The GTP site is built by Ser39, Gly42, Lys43, Thr44, Ser45, Thr56, Ser57, Ser61, and Thr62. Thr44 contacts Mg(2+). A Switch 1 motif is present at residues 53-66 (DSFTSAFVSTVGID). Mg(2+) contacts are provided by Thr62 and Asp85. A Phosphothreonine; by LRRK2 modification is found at Thr86. Residues 86–104 (TAGQERYRTITTAYYRGAM) carry the Switch 2 motif. Residues Gly88, Asn143, Lys144, Asp146, Ala174, and Lys175 each coordinate GTP. Ser196 and Ser198 each carry phosphoserine. Residues 202-227 (DPAITAAKQSTRLKETPPPPQPNCGC) form a disordered region. Thr206 is modified (phosphothreonine). A compositionally biased stretch (pro residues) spans 217–227 (TPPPPQPNCGC). S-geranylgeranyl cysteine attachment occurs at residues Cys225 and Cys227. Position 227 is a cysteine methyl ester (Cys227).

Belongs to the small GTPase superfamily. Rab family. Interacts with RIMS1, RIMS2, RPH3A and RPH3AL. Interacts with GDI2, CHM and CHML; phosphorylation at Thr-86 disrupts these interactions. Interacts with MADD (via uDENN domain); the GTP-bound form is preferred for interaction. Mg(2+) is required as a cofactor. In terms of processing, phosphorylation of Thr-86 in the switch II region by LRRK2 prevents the association of RAB regulatory proteins, including CHM, CHML and RAB GDP dissociation inhibitor GDI2.

Its subcellular location is the cell membrane. The catalysed reaction is GTP + H2O = GDP + phosphate + H(+). Regulated by guanine nucleotide exchange factors (GEFs) which promote the exchange of bound GDP for free GTP. Regulated by GTPase activating proteins (GAPs) which increase the GTP hydrolysis activity. Inhibited by GDP dissociation inhibitors (GDIs) which prevent Rab-GDP dissociation. The small GTPases Rab are key regulators of intracellular membrane trafficking, from the formation of transport vesicles to their fusion with membranes. Rabs cycle between an inactive GDP-bound form and an active GTP-bound form that is able to recruit to membranes different sets of downstream effectors directly responsible for vesicle formation, movement, tethering and fusion. This Mus musculus (Mouse) protein is Ras-related protein Rab-3C.